A 226-amino-acid polypeptide reads, in one-letter code: AA9 family lytic polysaccharide monooxygenase E (226 aa).

A signal peptide spans 1–18 (MLANGAIVFLAAALGVSG). Position 19 (His-19) interacts with Cu(2+). 2 cysteine pairs are disulfide-bonded: Cys-56–Cys-174 and Cys-144–Cys-226. N-linked (GlcNAc...) asparagine glycosylation occurs at Asn-69. Residue His-86 coordinates Cu(2+). Residues His-160 and Gln-169 each contribute to the O2 site. Tyr-171 contributes to the Cu(2+) binding site.

The protein belongs to the polysaccharide monooxygenase AA9 family. Cu(2+) serves as cofactor.

Its subcellular location is the secreted. It catalyses the reaction [(1-&gt;4)-beta-D-glucosyl]n+m + reduced acceptor + O2 = 4-dehydro-beta-D-glucosyl-[(1-&gt;4)-beta-D-glucosyl]n-1 + [(1-&gt;4)-beta-D-glucosyl]m + acceptor + H2O.. Lytic polysaccharide monooxygenase (LPMO) that depolymerizes crystalline and amorphous polysaccharides via the oxidation of scissile alpha- or beta-(1-4)-glycosidic bonds, yielding C1 and C4 oxidation products. Catalysis by LPMOs requires the reduction of the active-site copper from Cu(II) to Cu(I) by a reducing agent and H(2)O(2) or O(2) as a cosubstrate. Shows endoglucanase activity on tamarind xyloglucan, as well as on beechwood xylan when combined with phosphoric acid swollen cellulose (PASC). Shows no activity on wheat arabinoxylan, konjac glucomannan, acetylated spruce galactoglucomannan, or cellopentaose. The polypeptide is AA9 family lytic polysaccharide monooxygenase E (Thermothielavioides terrestris (strain ATCC 38088 / NRRL 8126) (Thielavia terrestris)).